Reading from the N-terminus, the 489-residue chain is Cysteine--tRNA ligase (489 aa).

Residue cysteine 27 participates in Zn(2+) binding. Residues 29 to 39 carry the 'HIGH' region motif; sequence VTVYDLCHLGH. Zn(2+)-binding residues include cysteine 211, histidine 236, and glutamate 240. Residues 268–272 carry the 'KMSKS' region motif; it reads KMSKS. Lysine 271 provides a ligand contact to ATP.

Belongs to the class-I aminoacyl-tRNA synthetase family. Monomer. Zn(2+) is required as a cofactor.

It localises to the cytoplasm. It catalyses the reaction tRNA(Cys) + L-cysteine + ATP = L-cysteinyl-tRNA(Cys) + AMP + diphosphate. The polypeptide is Cysteine--tRNA ligase (Prochlorococcus marinus (strain MIT 9312)).